A 138-amino-acid polypeptide reads, in one-letter code: 1,4-dihydroxy-2-naphthoyl-CoA hydrolase (138 aa).

The active site involves Asp14.

The protein belongs to the 4-hydroxybenzoyl-CoA thioesterase family. DHNA-CoA hydrolase subfamily.

It carries out the reaction 1,4-dihydroxy-2-naphthoyl-CoA + H2O = 1,4-dihydroxy-2-naphthoate + CoA + H(+). The protein operates within cofactor biosynthesis; phylloquinone biosynthesis. It participates in quinol/quinone metabolism; 1,4-dihydroxy-2-naphthoate biosynthesis; 1,4-dihydroxy-2-naphthoate from chorismate: step 7/7. Functionally, catalyzes the hydrolysis of 1,4-dihydroxy-2-naphthoyl-CoA (DHNA-CoA) to 1,4-dihydroxy-2-naphthoate (DHNA), a reaction involved in phylloquinone (vitamin K1) biosynthesis. This Rippkaea orientalis (strain PCC 8801 / RF-1) (Cyanothece sp. (strain PCC 8801)) protein is 1,4-dihydroxy-2-naphthoyl-CoA hydrolase.